Reading from the N-terminus, the 140-residue chain is ATP synthase epsilon chain (140 aa).

It belongs to the ATPase epsilon chain family. In terms of assembly, F-type ATPases have 2 components, CF(1) - the catalytic core - and CF(0) - the membrane proton channel. CF(1) has five subunits: alpha(3), beta(3), gamma(1), delta(1), epsilon(1). CF(0) has three main subunits: a, b and c.

It is found in the cell inner membrane. Functionally, produces ATP from ADP in the presence of a proton gradient across the membrane. In Nitrosomonas europaea (strain ATCC 19718 / CIP 103999 / KCTC 2705 / NBRC 14298), this protein is ATP synthase epsilon chain.